The chain runs to 330 residues: Phosphate acyltransferase (330 aa).

It belongs to the PlsX family. Homodimer. Probably interacts with PlsY.

It localises to the cytoplasm. The enzyme catalyses a fatty acyl-[ACP] + phosphate = an acyl phosphate + holo-[ACP]. Its pathway is lipid metabolism; phospholipid metabolism. Functionally, catalyzes the reversible formation of acyl-phosphate (acyl-PO(4)) from acyl-[acyl-carrier-protein] (acyl-ACP). This enzyme utilizes acyl-ACP as fatty acyl donor, but not acyl-CoA. The chain is Phosphate acyltransferase from Streptococcus pneumoniae (strain ATCC 700669 / Spain 23F-1).